A 192-amino-acid chain; its full sequence is Thymidine kinase (192 aa).

Residues 9 to 16 (SAMNAGKS) and 87 to 90 (DECQ) contribute to the ATP site. E88 serves as the catalytic Proton acceptor. Zn(2+) is bound by residues C145, C147, C182, and H185.

Belongs to the thymidine kinase family. In terms of assembly, homotetramer.

The protein resides in the cytoplasm. It catalyses the reaction thymidine + ATP = dTMP + ADP + H(+). This is Thymidine kinase from Shewanella oneidensis (strain ATCC 700550 / JCM 31522 / CIP 106686 / LMG 19005 / NCIMB 14063 / MR-1).